Consider the following 381-residue polypeptide: Magnesium transporter MRS2-I (381 aa).

2 consecutive transmembrane segments (helical) span residues 316-336 (LFLS…GIFG) and 353-373 (WVVL…VAYA). Positions 336–338 (GMN) match the Required for magnesium transport activity motif.

This sequence belongs to the CorA metal ion transporter (MIT) (TC 1.A.35.5) family.

It localises to the membrane. Its function is as follows. Magnesium transporter that may mediate the influx of magnesium. This chain is Magnesium transporter MRS2-I (MRS2-I), found in Oryza sativa subsp. indica (Rice).